The sequence spans 251 residues: tRNA pseudouridine synthase A (251 aa).

Asp52 serves as the catalytic Nucleophile. Residue Tyr113 participates in substrate binding.

It belongs to the tRNA pseudouridine synthase TruA family. Homodimer.

The catalysed reaction is uridine(38/39/40) in tRNA = pseudouridine(38/39/40) in tRNA. Its function is as follows. Formation of pseudouridine at positions 38, 39 and 40 in the anticodon stem and loop of transfer RNAs. This is tRNA pseudouridine synthase A from Brucella anthropi (strain ATCC 49188 / DSM 6882 / CCUG 24695 / JCM 21032 / LMG 3331 / NBRC 15819 / NCTC 12168 / Alc 37) (Ochrobactrum anthropi).